The following is a 654-amino-acid chain: Threonine--tRNA ligase (654 aa).

The TGS domain maps to 1–63 (MASINVKFPD…TTDGSIEIIA (63 aa)). Residues 248–546 (DHRVIGNELD…LTEIYKGAFP (299 aa)) form a catalytic region. Cysteine 342, histidine 393, and histidine 523 together coordinate Zn(2+).

This sequence belongs to the class-II aminoacyl-tRNA synthetase family. In terms of assembly, homodimer. Zn(2+) is required as a cofactor.

Its subcellular location is the cytoplasm. The catalysed reaction is tRNA(Thr) + L-threonine + ATP = L-threonyl-tRNA(Thr) + AMP + diphosphate + H(+). Catalyzes the attachment of threonine to tRNA(Thr) in a two-step reaction: L-threonine is first activated by ATP to form Thr-AMP and then transferred to the acceptor end of tRNA(Thr). Also edits incorrectly charged L-seryl-tRNA(Thr). The polypeptide is Threonine--tRNA ligase (Lactiplantibacillus plantarum (strain ATCC BAA-793 / NCIMB 8826 / WCFS1) (Lactobacillus plantarum)).